Reading from the N-terminus, the 867-residue chain is Protein translocase subunit SecA 1 (867 aa).

ATP-binding positions include Q86, 104-108 (GEGKT), and D493.

It belongs to the SecA family. In terms of assembly, monomer and homodimer. Part of the essential Sec protein translocation apparatus which comprises SecA, SecYEG and auxiliary proteins SecDF. Other proteins may also be involved.

Its subcellular location is the cell membrane. The protein localises to the cytoplasm. It catalyses the reaction ATP + H2O + cellular proteinSide 1 = ADP + phosphate + cellular proteinSide 2.. Part of the Sec protein translocase complex. Interacts with the SecYEG preprotein conducting channel. Has a central role in coupling the hydrolysis of ATP to the transfer of proteins into and across the cell membrane, serving as an ATP-driven molecular motor driving the stepwise translocation of polypeptide chains across the membrane. The sequence is that of Protein translocase subunit SecA 1 from Corynebacterium jeikeium (strain K411).